The following is a 256-amino-acid chain: NifU-like protein, mitochondrial (256 aa).

The CxxC motif signature appears at 196–199 (CTSC).

The protein belongs to the NifU family. In terms of assembly, homodimer; in absence of BOL3, probably bridged by an iron-sulfure cluster. Interacts with BOL3. Interacts with apo-target proteins, such as ACO1, LYS4, ACO2 and SDH2.

It is found in the mitochondrion matrix. In terms of biological role, involved in iron homeostasis within the mitochondrion where it is involved in the assembly of iron-sulfur proteins. Together with BOL3, required during the last step of iron-sulfur protein assembly when the iron-sulfur cluster is inserted into the target protein. Required for protecting iron sulfur clusters from oxidative damage. The polypeptide is NifU-like protein, mitochondrial (NFU1) (Saccharomyces cerevisiae (strain ATCC 204508 / S288c) (Baker's yeast)).